The following is a 469-amino-acid chain: Cysteine--tRNA ligase (469 aa).

Position 33 (C33) interacts with Zn(2+). Positions 35–45 (ATVQGLPHIGH) match the 'HIGH' region motif. Residues C211, H236, and E240 each contribute to the Zn(2+) site. Residues 267–271 (KMSKS) carry the 'KMSKS' region motif. K270 is a binding site for ATP.

The protein belongs to the class-I aminoacyl-tRNA synthetase family. In terms of assembly, monomer. It depends on Zn(2+) as a cofactor.

The protein resides in the cytoplasm. The catalysed reaction is tRNA(Cys) + L-cysteine + ATP = L-cysteinyl-tRNA(Cys) + AMP + diphosphate. In Mycobacterium bovis (strain ATCC BAA-935 / AF2122/97), this protein is Cysteine--tRNA ligase (cysS).